A 1069-amino-acid chain; its full sequence is Protocadherin-7 (1069 aa).

The first 28 residues, 1-28 (MLRMRTAGWARGWCLGCCLLLPLSLSLA), serve as a signal peptide directing secretion. Cadherin domains lie at 29–143 (AAKQ…TPTF), 144–308 (PSPV…SPRF), 309–415 (EKSV…VPSI), 424–535 (PLKD…PPMF), 536–639 (GQSV…DPKF), 640–742 (MQDV…APTV), and 745–862 (PKNI…IPLT). The Extracellular segment spans residues 29-879 (AAKQLLRYRL…SYEISKQRLS (851 aa)). Residue Asn-79 is glycosylated (N-linked (GlcNAc...) asparagine). The segment at 182–242 (LLQEPGGGGS…GGTNPGGRSS (61 aa)) is disordered. Gly residues predominate over residues 207 to 221 (PGGGGNGASGGGSGG). N-linked (GlcNAc...) asparagine glycosylation is found at Asn-689, Asn-747, Asn-780, Asn-822, Asn-840, and Asn-845. The chain crosses the membrane as a helical span at residues 880-900 (IVIGVVAGIMTVILIILIVVM). Residues 901 to 1069 (ARYCRSKNKN…RLHPYITVFG (169 aa)) are Cytoplasmic-facing. The interval 910–988 (NGYEAGKKDH…RYRSVNGGPG (79 aa)) is disordered. A compositionally biased stretch (basic residues) spans 930–944 (KSKKPKKDKKNKKSK). Phosphoserine is present on residues Ser-989 and Ser-1011.

In terms of tissue distribution, expressed predominantly in brain and heart and at lower levels in various other tissues.

Its subcellular location is the cell membrane. The polypeptide is Protocadherin-7 (PCDH7) (Homo sapiens (Human)).